Here is a 103-residue protein sequence, read N- to C-terminus: uncharacterized protein (103 aa).

Positions 1–21 are cleaved as a signal peptide; sequence MTGFKVSSFFYILALSRFFNA.

This is an uncharacterized protein from Saccharomyces cerevisiae (strain ATCC 204508 / S288c) (Baker's yeast).